Here is an 886-residue protein sequence, read N- to C-terminus: Vam6/Vps39-like protein (886 aa).

A CNH domain is found at 15–294; the sequence is PLQIDCLAAW…RFITSGGSNI (280 aa). The stretch at 573–750 is one CHCR repeat; the sequence is FTEDLPEVES…LLRMYLSPPS (178 aa).

Belongs to the VAM6/VPS39 family. As to quaternary structure, homooligomer. Interacts with TGFBR2 and, less efficiently, with TGFBR1; interaction with TGFBR2 is independent of the receptor kinase activity and of the presence of TGF-beta. Also interacts with ACVR2B, but not with BMPR2. Interacts with SMAD4, preferentially following TGF-beta treatment. Component of the putative homotypic fusion and vacuole protein sorting (HOPS) complex; the core of which composed of the class C Vps proteins VPS11, VPS16, VPS18 and VPS33A, is associated with VPS39 and VPS41. Interacts with PLEKHM2; involved in VPS39 recruitment to ARL8B-containing lysosomes. Associates with adapter protein complex 3 (AP-3) and clathrin:AP-3 complexes. Interacts with STX17; this interaction is increased in the absence of TMEM39A. Interacts with RAB7, RAB2A and RAB2B. Interacts with RAB2A (GTP-bound); the interaction contributes to obtaining a functional HOPS complex that promotes autophagosome-lysosome membrane fusion driven by STX17-SNAP29-VAMP8. Interacts with RAB39A (GTP-bound) and RAB39B (GTP-bound); interaction with RAB39A contributes to obtaining a functional HOPS complex.

The protein localises to the cytoplasm. It is found in the lysosome membrane. Its subcellular location is the late endosome membrane. Regulator of TGF-beta/activin signaling, inhibiting SMAD3- and activating SMAD2-dependent transcription. Acts by interfering with SMAD3/SMAD4 complex formation, this would lead to inhibition of SMAD3-dependent transcription and relieve SMAD3 inhibition of SMAD2-dependent promoters, thus increasing SMAD2-dependent transcription. Its function is as follows. Plays a role in vesicle-mediated protein trafficking to lysosomal compartments including the endocytic membrane transport and autophagic pathways. Acts as a component of the HOPS endosomal tethering complex which is proposed to be involved in the Rab5-to-Rab7 endosome conversion probably implicating MON1A/B, and via binding SNAREs and SNARE complexes to mediate tethering and docking events during SNARE-mediated membrane fusion. The HOPS complex is proposed to be recruited to Rab7 on the late endosomal membrane and to regulate late endocytic, phagocytic and autophagic traffic towards lysosomes. Involved in homotypic vesicle fusions between late endosomes and in heterotypic fusions between late endosomes and lysosomes. Required for fusion of endosomes and autophagosomes with lysosomes. The sequence is that of Vam6/Vps39-like protein from Mus musculus (Mouse).